A 181-amino-acid chain; its full sequence is Shikimate kinase (181 aa).

ATP is bound at residue 17 to 22; sequence GAGKTT. Mg(2+) is bound at residue T21. D39, R63, and G85 together coordinate substrate. R122 is an ATP binding site. Position 141 (R141) interacts with substrate.

It belongs to the shikimate kinase family. As to quaternary structure, monomer. Requires Mg(2+) as cofactor.

The protein localises to the cytoplasm. The enzyme catalyses shikimate + ATP = 3-phosphoshikimate + ADP + H(+). It functions in the pathway metabolic intermediate biosynthesis; chorismate biosynthesis; chorismate from D-erythrose 4-phosphate and phosphoenolpyruvate: step 5/7. Catalyzes the specific phosphorylation of the 3-hydroxyl group of shikimic acid using ATP as a cosubstrate. This chain is Shikimate kinase, found in Nostoc sp. (strain PCC 7120 / SAG 25.82 / UTEX 2576).